The sequence spans 715 residues: Fatty acid oxidation complex subunit alpha (715 aa).

Residues 1–190 (MTTTSAFMLN…KAGLVDDVVP (190 aa)) form an enoyl-CoA hydratase region. Residues 306–714 (GPLNSVGILG…FWTNGETDQG (409 aa)) are 3-hydroxyacyl-CoA dehydrogenase.

The protein in the N-terminal section; belongs to the enoyl-CoA hydratase/isomerase family. It in the central section; belongs to the 3-hydroxyacyl-CoA dehydrogenase family. Heterotetramer of two alpha chains (FadJ) and two beta chains (FadI).

The protein localises to the cytoplasm. It carries out the reaction a (3S)-3-hydroxyacyl-CoA = a (2E)-enoyl-CoA + H2O. It catalyses the reaction a 4-saturated-(3S)-3-hydroxyacyl-CoA = a (3E)-enoyl-CoA + H2O. The enzyme catalyses a (3S)-3-hydroxyacyl-CoA + NAD(+) = a 3-oxoacyl-CoA + NADH + H(+). The catalysed reaction is (3S)-3-hydroxybutanoyl-CoA = (3R)-3-hydroxybutanoyl-CoA. The protein operates within lipid metabolism; fatty acid beta-oxidation. In terms of biological role, catalyzes the formation of a hydroxyacyl-CoA by addition of water on enoyl-CoA. Also exhibits 3-hydroxyacyl-CoA epimerase and 3-hydroxyacyl-CoA dehydrogenase activities. In Salmonella typhimurium (strain LT2 / SGSC1412 / ATCC 700720), this protein is Fatty acid oxidation complex subunit alpha.